The chain runs to 360 residues: Small ribosomal subunit protein mS22 (360 aa).

The residue at position 54 (Ser-54) is a Phosphoserine. Lys-211 is subject to N6-acetyllysine.

Belongs to the mitochondrion-specific ribosomal protein mS22 family. In terms of assembly, component of the mitochondrial small ribosomal subunit (mt-SSU). Mature mammalian 55S mitochondrial ribosomes consist of a small (28S) and a large (39S) subunit. The 28S small subunit contains a 12S ribosomal RNA (12S mt-rRNA) and 30 different proteins. The 39S large subunit contains a 16S rRNA (16S mt-rRNA), a copy of mitochondrial valine transfer RNA (mt-tRNA(Val)), which plays an integral structural role, and 52 different proteins.

It is found in the mitochondrion. The polypeptide is Small ribosomal subunit protein mS22 (MRPS22) (Homo sapiens (Human)).